The chain runs to 391 residues: Steroid side-chain-cleaving aldolase (391 aa).

Tyr294 serves as the catalytic Proton acceptor. Tyr344 functions as the Proton donor in the catalytic mechanism.

The protein belongs to the thiolase-like superfamily. In terms of assembly, homodimer. Interacts with the ChsH1/ChsH2 hydratase via the DUF35 C-terminal region of ChsH2 (ChsH2-DUF35).

It carries out the reaction 17-hydroxy-3-oxochol-4-en-22-oyl-CoA = androst-4-ene-3,17-dione + propanoyl-CoA. Its function is as follows. Probably involved in bile acid degradation. In vitro, when associated with the ChsH1/ChsH2 hydratase, catalyzes the retroaldol cleavage of 17-hydroxy-3-oxo-4-pregnene-20-carboxyl-CoA (17-HOPC-CoA), forming androst-4-ene-3,17-dione and propionyl-CoA. The in vivo substrate is probably a closely analogous bile acid degradation metabolite. The polypeptide is Steroid side-chain-cleaving aldolase (Thermomonospora curvata (strain ATCC 19995 / DSM 43183 / JCM 3096 / KCTC 9072 / NBRC 15933 / NCIMB 10081 / Henssen B9)).